A 491-amino-acid chain; its full sequence is Cobyric acid synthase (491 aa).

The region spanning 246–435 is the GATase cobBQ-type domain; sequence KIDVAVIKLP…IHGIFDGANF (190 aa). The active-site Nucleophile is the C327. H427 is a catalytic residue.

This sequence belongs to the CobB/CobQ family. CobQ subfamily.

Its pathway is cofactor biosynthesis; adenosylcobalamin biosynthesis. In terms of biological role, catalyzes amidations at positions B, D, E, and G on adenosylcobyrinic A,C-diamide. NH(2) groups are provided by glutamine, and one molecule of ATP is hydrogenolyzed for each amidation. In Clostridium acetobutylicum (strain ATCC 824 / DSM 792 / JCM 1419 / IAM 19013 / LMG 5710 / NBRC 13948 / NRRL B-527 / VKM B-1787 / 2291 / W), this protein is Cobyric acid synthase.